We begin with the raw amino-acid sequence, 47 residues long: uncharacterized protein (47 aa).

Residues 1 to 18 (MKKWLLIIAGALIISACA) form the signal peptide. The disordered stretch occupies residues 28–47 (EGSHSGVKFDKDSRQWGLNQ).

This is an uncharacterized protein from Haemophilus influenzae (strain ATCC 51907 / DSM 11121 / KW20 / Rd).